We begin with the raw amino-acid sequence, 75 residues long: Putative DNA-directed RNA polymerase subunit omega (75 aa).

Belongs to the RNA polymerase subunit omega family.

The protein localises to the plastid. It is found in the chloroplast. It catalyses the reaction RNA(n) + a ribonucleoside 5'-triphosphate = RNA(n+1) + diphosphate. In terms of biological role, may be involved in RNA polymerase activity. This chain is Putative DNA-directed RNA polymerase subunit omega (rpoZ), found in Mesostigma viride (Green alga).